The primary structure comprises 257 residues: Phosphonates import ATP-binding protein PhnC (257 aa).

An ABC transporter domain is found at 2–246 (IEFRNVSKVY…KFAEIYGDVV (245 aa)). Residue 35–42 (GLSGAGKS) coordinates ATP.

Belongs to the ABC transporter superfamily. Phosphonates importer (TC 3.A.1.9.1) family. The complex is composed of two ATP-binding proteins (PhnC), two transmembrane proteins (PhnE) and a solute-binding protein (PhnD).

It localises to the cell membrane. It catalyses the reaction phosphonate(out) + ATP + H2O = phosphonate(in) + ADP + phosphate + H(+). Functionally, part of the ABC transporter complex PhnCDE involved in phosphonates import. Responsible for energy coupling to the transport system. The chain is Phosphonates import ATP-binding protein PhnC from Bacillus anthracis.